An 803-amino-acid polypeptide reads, in one-letter code: Nucleoporin nup82 (803 aa).

Component of the nuclear pore complex (NPC). NPC constitutes the exclusive means of nucleocytoplasmic transport. NPCs allow the passive diffusion of ions and small molecules and the active, nuclear transport receptor-mediated bidirectional transport of macromolecules such as proteins, RNAs, ribonucleoparticles (RNPs), and ribosomal subunits across the nuclear envelope.

Its subcellular location is the nucleus. The protein localises to the nuclear pore complex. The protein resides in the nucleus membrane. Its function is as follows. Functions as a component of the nuclear pore complex (NPC). NPC components, collectively referred to as nucleoporins (NUPs), can play the role of both NPC structural components and of docking or interaction partners for transiently associated nuclear transport factors. This chain is Nucleoporin nup82, found in Schizosaccharomyces pombe (strain 972 / ATCC 24843) (Fission yeast).